Here is a 1574-residue protein sequence, read N- to C-terminus: MAFSKGFRIYHKLDPPPFSLIVETRHKEECLMFESGAVAVLSSAEKEAIKGTYAKVLDAYGLLGVLRLNLGDTMLHYLVLVTGCMSVGKIQESEVFRVTSTEFISLRVDASDEDRISEVRKVLNSGNFYFAWSASGVSLDLSLNAHRSMQEHTTDNRFFWNQSLHLHLKHYGVNCDDWLLRLMCGGVEIRTIYAAHKQAKACLISRLSCERAGTRFNVRGTNDDGHVANFVETEQVIYLDDCVSSFIQIRGSVPLFWEQPGLQVGSHRVRMSRGFEANAPAFDRHFRTLKDLYGKQIVVNLLGSKEGEHMLSKAFQSHLKASEHASDIHMVSFDYHQMVKGGKAEKLHSVLKPQVQKFLDYGFFYFDGSAVQRCQSGTVRTNCLDCLDRTNSVQAFLGLEMLAKQLEALGLAEKPQLVTRFQEVFRSMWSVNGDSISKIYAGTGALEGKAKLKDGARSVTRTIQNNFFDSSKQEAIDVLLLGNTLNSDLADKARALLTTGSLRVSEQTLQSASSKVLKNMCENFYKYSKPKKIRVCVGTWNVNGGKQFRSIAFKNQTLTDWLLDAPKLAGIQEFQDKRSKPTDIFAIGFEEMVELNAGNIVNASTTNQKLWAVELQKTISRDNKYVLLASEQLVGVCLFVFIRPQHAPFIRDVAVDTVKTGMGGATGNKGAVAIRMLFHTTSLCFVCSHFAAGQSQVKERNEDFVEIARKLSFPMGRMLFSHDYVFWCGDFNYRIDLPNEEVKELIRQQNWDSLIAGDQLINQKNAGQIFRGFLEGKVTFAPTYKYDLFSEDYDTSEKCRTPAWTDRVLWRRRKWPFDRSAEDLDLLNASFQDESKILYTWTPGTLLHYGRAELKTSDHRPVVALIDIDIFEVEAEERQKIYKEVIAVQGPPDGTVLVSIKSSAQENTFFDDALIDELLQQFAHFGEVILIRFVEDKMWVTFLEGSSALNVLSLNGKELLNRTITITLKSPDWIKTLEEEMSLEKISVTLPSSTSSTLLGEDAEVSADFDMEGDVDDYSAEVEELLPQHLQPSSSSGLGTSPSSSPRTSPCQSPTAPEYSAPSLPIRPSRAPSRTPGPLSSQGAPVDTQPAAQKESSQTIEPKRPPPPRPVAPPARPAPPQRPPPPSGARSPAPARKEFGGVGAPPSPGVTRREMEAPKSPGTARKDNIGRNQPSPQAGLAGPGPSGYGAARPTIPARAGVISAPQSQARVSAGRLTPESQSKPLETSKGPAVLPEPLKPQAAFPPQPSLPTPAQKLQDPLVPIAAPMPPSIPQSNLETPPLPPPRSRSSQSLPSDSSPQLQQEQPTGQQVKINGACGVKQEPTLKSDPFEDLSLSVLAVSKAQPSAQISPVLTPDPKMLIQLPSASQSKVNSLSSVSCMLTMPPVPEQSKSQESVGSSANPFPSLPTRNPFTDRTAAPGNPFRVQSQESEATSWLSKEEPVSNSPFPPLMPLSHDMSKPSSSLDGFEDNFDLQSQSTVKTSNPKGWVTFDEDEDFPTKGKSRSVYPDSLGNTAASFDDDWSKGTNVSFCVLPARRPPPPPPPVPLLPPGTTSSAGPSTTLSSKASPTLDFTER.

The SAC domain occupies 119 to 442; the sequence is VRKVLNSGNF…GDSISKIYAG (324 aa). The interval 500–899 is catalytic; that stretch reads GSLRVSEQTL…GPPDGTVLVS (400 aa). 2 positions are modified to phosphoserine: S820 and S830. The RRM domain occupies 894–971; it reads GTVLVSIKSS…RTITITLKSP (78 aa). Positions 1029 to 1054 are enriched in low complexity; sequence HLQPSSSSGLGTSPSSSPRTSPCQSP. Residues 1029 to 1327 form a disordered region; sequence HLQPSSSSGL…GVKQEPTLKS (299 aa). Phosphoserine is present on S1053. The segment covering 1090–1100 has biased composition (polar residues); that stretch reads PAAQKESSQTI. Pro residues predominate over residues 1105-1127; that stretch reads PPPPRPVAPPARPAPPQRPPPPS. 2 positions are modified to phosphoserine: S1147 and S1175. At R1198 the chain carries Omega-N-methylarginine. T1217 carries the post-translational modification Phosphothreonine. Over residues 1287–1310 the composition is skewed to low complexity; sequence SRSSQSLPSDSSPQLQQEQPTGQQ. Phosphoserine occurs at positions 1289 and 1350. T1354 carries the post-translational modification Phosphothreonine. Disordered regions lie at residues 1382–1519 and 1532–1574; these read TMPP…SFDD and LPAR…FTER. Polar residues predominate over residues 1389–1413; that stretch reads QSKSQESVGSSANPFPSLPTRNPFT. Repeat copies occupy residues 1401 to 1403, 1410 to 1412, and 1421 to 1423. A 3 X 3 AA repeats of N-P-F region spans residues 1401–1423; that stretch reads NPFPSLPTRNPFTDRTAAPGNPF. 2 stretches are compositionally biased toward polar residues: residues 1424–1436 and 1472–1484; these read RVQS…TSWL and DLQS…TSNP. Positions 1535 to 1548 are enriched in pro residues; the sequence is RRPPPPPPPVPLLP. The segment covering 1549-1563 has biased composition (low complexity); sequence PGTTSSAGPSTTLSS. Position 1566 is a phosphoserine (S1566).

Belongs to the synaptojanin family. It in the central section; belongs to the inositol 1,4,5-trisphosphate 5-phosphatase family. In terms of assembly, interacts with ASH/GRB2. Interacts with PACSIN1, PACSIN2 and PACSIN3. Interacts with AMPH, SH3GL1, SH3GL2 and SH3GL3. Interacts with MYO1E (via SH3 domain). Interacts with BIN1 and DNM1. Interacts with EPS15. Found in neonatal brain, and in a wide variety of adult non-neuronal tissues. Concentrated at clathrin-coated endocytic intermediates in nerve terminals. Also detected in the lung and heart. Expressed at higher levels than isoform 2 in the testis and liver and is not detected in the skeletal muscle. In terms of tissue distribution, expressed predominantly in the neurons, but is also found in all other tissues at much lower levels. Also detected in the lung and heart. Epressed at lower levels than isoform 1 in the testis and liver and is not detected in the skeletal muscle. As to expression, expressed in the brain.

Its subcellular location is the membrane. The protein resides in the cytoplasm. The protein localises to the perinuclear region. It catalyses the reaction a 1,2-diacyl-sn-glycero-3-phospho-(1D-myo-inositol-4,5-bisphosphate) + H2O = a 1,2-diacyl-sn-glycero-3-phospho-(1D-myo-inositol 4-phosphate) + phosphate. In terms of biological role, phosphatase that acts on various phosphoinositides, including phosphatidylinositol 4-phosphate, phosphatidylinositol (4,5)-bisphosphate and phosphatidylinositol (3,4,5)-trisphosphate. Has a role in clathrin-mediated endocytosis. Hydrolyzes PIP2 bound to actin regulatory proteins resulting in the rearrangement of actin filaments downstream of tyrosine kinase and ASH/GRB2. The sequence is that of Synaptojanin-1 (Synj1) from Rattus norvegicus (Rat).